The primary structure comprises 452 residues: Activating transcription factor 7-interacting protein 2 (452 aa).

Serine 184 carries the phosphoserine modification. The tract at residues 185–206 (RSKRISSVNHTPLNSSEKAGRK) is disordered. The residue at position 257 (serine 257) is a Phosphoserine. The Fibronectin type-III domain occupies 346-450 (PPQKPELKVK…IKSIPRFSEN (105 aa)).

Belongs to the MCAF family. In terms of assembly, interacts with MBD1, SETDB1 and SP1. Probably forms a complex with SETDB1 and MBD1. Expressed in testis.

The protein localises to the nucleus. In terms of biological role, recruiter that couples transcriptional factors to general transcription apparatus and thereby modulates transcription regulation and chromatin formation. Can both act as an activator or a repressor depending on the context. Mediates MBD1-dependent transcriptional repression, probably by recruiting complexes containing SETDB1. The complex formed with MBD1 and SETDB1 represses transcription and probably couples DNA methylation and histone H3 'Lys-9' trimethylation (H3K9me3) activity. This Mus musculus (Mouse) protein is Activating transcription factor 7-interacting protein 2 (Atf7ip2).